The following is a 2079-amino-acid chain: von Willebrand factor A domain-containing protein DDB_G0286969 (2079 aa).

The region spanning 11 to 147 (EQILPSFISI…ELEIIITYST (137 aa)) is the VIT domain. The tract at residues 178–203 (NENSTTNTNTQTQPQSVNTTTTTTPS) is disordered. The span at 180 to 203 (NSTTNTNTQTQPQSVNTTTTTTPS) shows a compositional bias: low complexity. In terms of domain architecture, VWFA spans 354–525 (ELIFLVDVSE…KVMRQLKRAL (172 aa)). Disordered regions lie at residues 761–800 (PTTLSGSGIPFYNPSSPNHDRNINTTQQPTPTQSTPLKTP), 832–866 (PFVPSPNKLPTTTTSAPATTPITTPAPTTTTTEVK), 956–1139 (AKPV…TKPT), 1155–1203 (NEPA…VSST), and 1239–1294 (DSNT…ADAE). Composition is skewed to low complexity over residues 785 to 800 (TTQQPTPTQSTPLKTP), 841 to 866 (PTTTTSAPATTPITTPAPTTTTTEVK), and 956 to 973 (AKPVEPAVVQQQQPQQTK). Residues 923 to 957 (EMIKIAEAKAAAEQKAAAEQKAIADAKAAAEQAAK) are a coiled coil. Over residues 974 to 989 (PKADKQSKQNAKDNKQ) the composition is skewed to basic and acidic residues. The segment covering 992–1006 (KPVVVEQKPPVVTET) has biased composition (low complexity). Over residues 1007 to 1021 (KPTVATESATPTKPT) the composition is skewed to polar residues. A compositionally biased stretch (low complexity) spans 1023–1061 (AQAAAAAAAAAQQAAQQAAATTPVKQQPTKQTTPNKSTP). Over residues 1092 to 1111 (KPVETKPVEQTKPVETKPVE) the composition is skewed to basic and acidic residues. The span at 1176–1198 (NNNNNNNNNNNNNNNNNNNNNNN) shows a compositional bias: low complexity. A compositionally biased stretch (polar residues) spans 1239-1272 (DSNTKAPDSLKTTPIFSNGPQGISPSSGNGSNKS). Over residues 1280–1292 (DRGGRGGRDRNAD) the composition is skewed to basic and acidic residues. Residues 1317–1527 (LKKFKFNLNR…LDLIDLRANK (211 aa)) enclose the MIF4G domain. Residues 1530–1755 (PKNSTQTKTK…PAPVEPVKPK (226 aa)) are disordered. 3 stretches are compositionally biased toward basic and acidic residues: residues 1538-1550 (TKKDESDKEERFI), 1557-1599 (QKRE…RDAP), and 1621-1634 (NNRDKGGRGGDRSG). Composition is skewed to low complexity over residues 1635–1659 (GKQSPSGKKDSGFGPSSGGSSLFGS) and 1688–1699 (SSSIPSIPNRSN). Over residues 1725-1740 (SNDRDSRGPSKPDNRK) the composition is skewed to basic and acidic residues. Positions 1760–1882 (KIEDDISMTL…PLNYLEEAYA (123 aa)) constitute an MI domain.

This Dictyostelium discoideum (Social amoeba) protein is von Willebrand factor A domain-containing protein DDB_G0286969.